The following is an 87-amino-acid chain: DNA-directed RNA polymerase subunit Rpo5 (87 aa).

It belongs to the archaeal Rpo5/eukaryotic RPB5 RNA polymerase subunit family. As to quaternary structure, part of the RNA polymerase complex.

The protein localises to the cytoplasm. It catalyses the reaction RNA(n) + a ribonucleoside 5'-triphosphate = RNA(n+1) + diphosphate. Functionally, DNA-dependent RNA polymerase (RNAP) catalyzes the transcription of DNA into RNA using the four ribonucleoside triphosphates as substrates. The sequence is that of DNA-directed RNA polymerase subunit Rpo5 from Thermoplasma volcanium (strain ATCC 51530 / DSM 4299 / JCM 9571 / NBRC 15438 / GSS1).